Reading from the N-terminus, the 338-residue chain is Ketol-acid reductoisomerase (NADP(+)) (338 aa).

Residues 1 to 181 (MKVFYDKDCD…GGGRTGIIET (181 aa)) enclose the KARI N-terminal Rossmann domain. NADP(+) is bound by residues 24-27 (YGSQ), R47, S50, T52, and 82-85 (DEFQ). H107 is a catalytic residue. Residue G133 participates in NADP(+) binding. In terms of domain architecture, KARI C-terminal knotted spans 182-327 (TFKDETETDL…EQLRSMMPWI (146 aa)). Mg(2+)-binding residues include D190, E194, E226, and E230. Substrate is bound at residue S251.

This sequence belongs to the ketol-acid reductoisomerase family. It depends on Mg(2+) as a cofactor.

It carries out the reaction (2R)-2,3-dihydroxy-3-methylbutanoate + NADP(+) = (2S)-2-acetolactate + NADPH + H(+). It catalyses the reaction (2R,3R)-2,3-dihydroxy-3-methylpentanoate + NADP(+) = (S)-2-ethyl-2-hydroxy-3-oxobutanoate + NADPH + H(+). It functions in the pathway amino-acid biosynthesis; L-isoleucine biosynthesis; L-isoleucine from 2-oxobutanoate: step 2/4. It participates in amino-acid biosynthesis; L-valine biosynthesis; L-valine from pyruvate: step 2/4. Its function is as follows. Involved in the biosynthesis of branched-chain amino acids (BCAA). Catalyzes an alkyl-migration followed by a ketol-acid reduction of (S)-2-acetolactate (S2AL) to yield (R)-2,3-dihydroxy-isovalerate. In the isomerase reaction, S2AL is rearranged via a Mg-dependent methyl migration to produce 3-hydroxy-3-methyl-2-ketobutyrate (HMKB). In the reductase reaction, this 2-ketoacid undergoes a metal-dependent reduction by NADPH to yield (R)-2,3-dihydroxy-isovalerate. The sequence is that of Ketol-acid reductoisomerase (NADP(+)) from Pseudomonas putida (strain ATCC 700007 / DSM 6899 / JCM 31910 / BCRC 17059 / LMG 24140 / F1).